Here is a 566-residue protein sequence, read N- to C-terminus: Malate synthase, glyoxysomal (566 aa).

R182 functions as the Proton acceptor in the catalytic mechanism. D467 functions as the Proton donor in the catalytic mechanism. The short motif at 564-566 is the Microbody targeting signal element; sequence SRL.

Belongs to the malate synthase family.

It localises to the glyoxysome. It carries out the reaction glyoxylate + acetyl-CoA + H2O = (S)-malate + CoA + H(+). The protein operates within carbohydrate metabolism; glyoxylate cycle; (S)-malate from isocitrate: step 2/2. The polypeptide is Malate synthase, glyoxysomal (Cucurbita maxima (Pumpkin)).